The primary structure comprises 80 residues: Cytochrome c-553 (80 aa).

Positions 13, 16, 17, and 58 each coordinate heme c.

Binds 1 heme c group covalently per subunit.

The protein localises to the periplasm. Functionally, natural electron acceptor for a formate dehydrogenase. In Desulfomicrobium norvegicum (strain DSM 1741 / NCIMB 8310) (Desulfovibrio baculatus (strain Norway 4)), this protein is Cytochrome c-553.